The primary structure comprises 139 residues: Endoribonuclease YbeY (139 aa).

Zn(2+)-binding residues include histidine 105, histidine 109, and aspartate 115.

It belongs to the endoribonuclease YbeY family. Zn(2+) serves as cofactor.

Its subcellular location is the cytoplasm. Single strand-specific metallo-endoribonuclease involved in late-stage 70S ribosome quality control and in maturation of the 3' terminus of the 16S rRNA. The sequence is that of Endoribonuclease YbeY from Flavobacterium johnsoniae (strain ATCC 17061 / DSM 2064 / JCM 8514 / BCRC 14874 / CCUG 350202 / NBRC 14942 / NCIMB 11054 / UW101) (Cytophaga johnsonae).